Here is a 320-residue protein sequence, read N- to C-terminus: Minor outer capsid protein P9 (320 aa).

Residues 297 to 320 are disordered; sequence RNDDEEELAGSEFTSLLSDDGRMG.

This sequence belongs to the phytoreovirus minor outer capsid protein P9 family.

It localises to the virion. Its subcellular location is the host cytoplasm. Its function is as follows. Minor outer capsid protein. This chain is Minor outer capsid protein P9, found in Rice gall dwarf virus (RGDV).